Consider the following 136-residue polypeptide: Nucleoside diphosphate kinase (136 aa).

Lysine 10, phenylalanine 58, arginine 86, threonine 92, arginine 104, and asparagine 114 together coordinate ATP. Residue histidine 117 is the Pros-phosphohistidine intermediate of the active site.

This sequence belongs to the NDK family. As to quaternary structure, homotetramer. It depends on Mg(2+) as a cofactor.

It is found in the cytoplasm. The catalysed reaction is a 2'-deoxyribonucleoside 5'-diphosphate + ATP = a 2'-deoxyribonucleoside 5'-triphosphate + ADP. It carries out the reaction a ribonucleoside 5'-diphosphate + ATP = a ribonucleoside 5'-triphosphate + ADP. In terms of biological role, major role in the synthesis of nucleoside triphosphates other than ATP. The ATP gamma phosphate is transferred to the NDP beta phosphate via a ping-pong mechanism, using a phosphorylated active-site intermediate. The polypeptide is Nucleoside diphosphate kinase (Corynebacterium diphtheriae (strain ATCC 700971 / NCTC 13129 / Biotype gravis)).